The primary structure comprises 198 residues: Single-stranded DNA cytosine deaminase (198 aa).

The short motif at Met1–Cys30 is the Bipartite nuclear localization signal element. The interval Asp2 to Glu26 is interaction with SUPT6H. Residues Gly23 to Leu129 enclose the CMP/dCMP-type deaminase domain. Thr27 is subject to Phosphothreonine; by PKA. Ser38 carries the phosphoserine; by PKA modification. An important for interaction with CTNNBL1 region spans residues Ala39–Cys42. His56 contacts Zn(2+). Glu58 (proton donor) is an active-site residue. Zn(2+)-binding residues include Cys87 and Cys90. The required for interaction with RNF126 stretch occupies residues Tyr88–Cys116. The Nuclear export signal motif lies at Leu183–Phe198.

This sequence belongs to the cytidine and deoxycytidylate deaminase family. In terms of assembly, interacts with CTNNBL1; the interaction is important for the immunoglobulin switch activity of AICDA. Interacts (via its NLS) with KPNA1. Interacts with PKA/PRKACA and PRKAR1A/PKR1. Interacts with SUPT6H, TRIM28 and NCL. Directly interacts with MCM3AP/GANP; this interaction may favor AICDA recruitment to immunoglobulin variable region genes, hence promoting somatic hypermutations. Requires Zn(2+) as cofactor. Post-translationally, ser-38 is the major site whereas Thr-27 is the minor site of phosphorylation. Phosphorylation regulates its class-switch recombination activity. In terms of processing, probably monoubiquitinated on several residues by RNF126. Expressed in germinal center B-cells (at protein level).

The protein localises to the nucleus. Its subcellular location is the cytoplasm. It carries out the reaction a 2'-deoxycytidine in single-stranded DNA + H2O + H(+) = a 2'-deoxyuridine in single-stranded DNA + NH4(+). Functionally, single-stranded DNA-specific cytidine deaminase. Involved in somatic hypermutation (SHM), gene conversion, and class-switch recombination (CSR) in B-lymphocytes by deaminating C to U during transcription of Ig-variable (V) and Ig-switch (S) region DNA. Required for several crucial steps of B-cell terminal differentiation necessary for efficient antibody responses. May also play a role in the epigenetic regulation of gene expression by participating in DNA demethylation. This is Single-stranded DNA cytosine deaminase (Aicda) from Mus musculus (Mouse).